The sequence spans 321 residues: Transcription factor MYB60 (321 aa).

HTH myb-type domains lie at 9–65 (KVGI…RPGI) and 66–116 (KRGN…KKKI). 2 DNA-binding regions (H-T-H motif) span residues 37 to 61 (WRSV…TNYL) and 89 to 112 (WAAI…NTHL). 2 positions are modified to S-nitrosocysteine: Cys-49 and Cys-53. 2 disordered regions span residues 196–215 (SPKA…EGSI) and 263–291 (HHQT…QKKH). Positions 206–215 (QNSSLEEGSI) are enriched in polar residues. Residues 273 to 290 (SDDHDHDHEMKMDHDQKK) are compositionally biased toward basic and acidic residues.

In terms of tissue distribution, restricted to stomatal guard cells. Mostly expressed in leaves, cotyledons, hypocotyls, seeds and ripened berry skins.

The protein localises to the nucleus. Its function is as follows. Transcription factor involved in the regulation of gene (e.g. drought-regulated and flavonoid biosynthetic genes) expression and stomatal movements leading to negative regulation of responses to drought and responses to other physiological stimuli (e.g. light). The polypeptide is Transcription factor MYB60 (Vitis vinifera (Grape)).